The following is a 63-amino-acid chain: Prokaryotic ubiquitin-like protein UBact (63 aa).

The disordered stretch occupies residues 1–63 (MSGRSTFGRF…SRRYRQRTGE (63 aa)). Over residues 17–50 (PWERKPGDDEGGPKRPKVERPDTNDLLKRMRRVD) the composition is skewed to basic and acidic residues. An Isoglutamyl lysine isopeptide (Glu-Lys) (interchain with K-? in acceptor proteins) cross-link involves residue Glu63.

Belongs to the ubiquitin-like protein UBact family.

May function as a protein modifier covalently attached to lysine residues of substrate proteins. This may serve to target the modified proteins for degradation by proteasomes. The sequence is that of Prokaryotic ubiquitin-like protein UBact from Handelsmanbacteria sp. (strain RIFCSPLOWO2_12_FULL_64_10).